The sequence spans 238 residues: 4-hydroxy-tetrahydrodipicolinate reductase (238 aa).

12–17 (GASGRM) is an NAD(+) binding site. An NADP(+)-binding site is contributed by arginine 40. NAD(+) contacts are provided by residues 93–95 (GTT) and 117–120 (ASNF). The active-site Proton donor/acceptor is the histidine 149. Residue histidine 150 coordinates (S)-2,3,4,5-tetrahydrodipicolinate. The active-site Proton donor is lysine 153. 159–160 (GT) serves as a coordination point for (S)-2,3,4,5-tetrahydrodipicolinate.

Belongs to the DapB family.

The protein resides in the cytoplasm. The enzyme catalyses (S)-2,3,4,5-tetrahydrodipicolinate + NAD(+) + H2O = (2S,4S)-4-hydroxy-2,3,4,5-tetrahydrodipicolinate + NADH + H(+). It catalyses the reaction (S)-2,3,4,5-tetrahydrodipicolinate + NADP(+) + H2O = (2S,4S)-4-hydroxy-2,3,4,5-tetrahydrodipicolinate + NADPH + H(+). It functions in the pathway amino-acid biosynthesis; L-lysine biosynthesis via DAP pathway; (S)-tetrahydrodipicolinate from L-aspartate: step 4/4. Functionally, catalyzes the conversion of 4-hydroxy-tetrahydrodipicolinate (HTPA) to tetrahydrodipicolinate. The chain is 4-hydroxy-tetrahydrodipicolinate reductase from Xanthomonas axonopodis pv. citri (strain 306).